The following is a 258-amino-acid chain: UPF0246 protein YaaA (258 aa).

The protein belongs to the UPF0246 family.

This chain is UPF0246 protein YaaA, found in Escherichia coli (strain 55989 / EAEC).